We begin with the raw amino-acid sequence, 204 residues long: Recombination protein RecR (204 aa).

A C4-type zinc finger spans residues 58 to 75; sequence CSICQNVTDRDADPCRIC. The 99-residue stretch at 83-181 folds into the Toprim domain; it reads SVICVVESPV…MVTKIARGIP (99 aa).

It belongs to the RecR family.

May play a role in DNA repair. It seems to be involved in an RecBC-independent recombinational process of DNA repair. It may act with RecF and RecO. This Chlorobium phaeovibrioides (strain DSM 265 / 1930) (Prosthecochloris vibrioformis (strain DSM 265)) protein is Recombination protein RecR.